The following is a 153-amino-acid chain: UPF0260 protein YcgN (153 aa).

This sequence belongs to the UPF0260 family.

The sequence is that of UPF0260 protein YcgN from Shigella boydii serotype 18 (strain CDC 3083-94 / BS512).